A 242-amino-acid chain; its full sequence is Phosphoribosyl isomerase A (242 aa).

Residue Asp12 is the Proton acceptor of the active site. Asp131 functions as the Proton donor in the catalytic mechanism.

The protein belongs to the HisA/HisF family.

The protein resides in the cytoplasm. The enzyme catalyses 1-(5-phospho-beta-D-ribosyl)-5-[(5-phospho-beta-D-ribosylamino)methylideneamino]imidazole-4-carboxamide = 5-[(5-phospho-1-deoxy-D-ribulos-1-ylimino)methylamino]-1-(5-phospho-beta-D-ribosyl)imidazole-4-carboxamide. It catalyses the reaction N-(5-phospho-beta-D-ribosyl)anthranilate = 1-(2-carboxyphenylamino)-1-deoxy-D-ribulose 5-phosphate. Its pathway is amino-acid biosynthesis; L-histidine biosynthesis; L-histidine from 5-phospho-alpha-D-ribose 1-diphosphate: step 4/9. It participates in amino-acid biosynthesis; L-tryptophan biosynthesis; L-tryptophan from chorismate: step 3/5. In terms of biological role, involved in both the histidine and tryptophan biosynthetic pathways. The protein is Phosphoribosyl isomerase A of Streptomyces avermitilis (strain ATCC 31267 / DSM 46492 / JCM 5070 / NBRC 14893 / NCIMB 12804 / NRRL 8165 / MA-4680).